The chain runs to 365 residues: Putrescine carbamoyltransferase (365 aa).

Residues 54–58 (STRTR), Arg-105, and His-132 each bind carbamoyl phosphate. Putrescine is bound at residue 277-280 (HCLP).

The protein belongs to the aspartate/ornithine carbamoyltransferase superfamily. PTCase family. Homotrimer.

The protein resides in the cytoplasm. It carries out the reaction carbamoyl phosphate + putrescine = N-carbamoylputrescine + phosphate + H(+). The protein operates within amine and polyamine biosynthesis; putrescine biosynthesis via agmatine pathway; putrescine from N-carbamoylputrescine (transferase route): step 1/1. Catalyzes the phosphorolysis of N-carbamoylputrescine to form carbamoyl phosphate and putrescine. Is involved in the degradation pathway of the polyamine agmatine. The polypeptide is Putrescine carbamoyltransferase (Mycoplasma mycoides subsp. mycoides SC (strain CCUG 32753 / NCTC 10114 / PG1)).